The chain runs to 239 residues: uncharacterized protein (239 aa).

This is an uncharacterized protein from Homo sapiens (Human).